Reading from the N-terminus, the 1383-residue chain is DNA-directed RNA polymerase subunit beta (1383 aa).

It belongs to the RNA polymerase beta chain family. The RNAP catalytic core consists of 2 alpha, 1 beta, 1 beta' and 1 omega subunit. When a sigma factor is associated with the core the holoenzyme is formed, which can initiate transcription.

The catalysed reaction is RNA(n) + a ribonucleoside 5'-triphosphate = RNA(n+1) + diphosphate. Its function is as follows. DNA-dependent RNA polymerase catalyzes the transcription of DNA into RNA using the four ribonucleoside triphosphates as substrates. The protein is DNA-directed RNA polymerase subunit beta of Bartonella henselae (strain ATCC 49882 / DSM 28221 / CCUG 30454 / Houston 1) (Rochalimaea henselae).